We begin with the raw amino-acid sequence, 851 residues long: Receptor like protein kinase S.2 (851 aa).

The 320-residue stretch at 117–436 (FSDELILGSG…LPSFKSHPLY (320 aa)) folds into the Protein kinase 1 domain. ATP-binding positions include 123 to 131 (LGSGGFGRV) and lysine 146. Aspartate 248 acts as the Proton acceptor in catalysis. The interval 448 to 471 (SATTTTTRTTMTTTTSTTSFNASS) is disordered. The 288-residue stretch at 532–819 (FSDARRVAEV…SILDGSERFF (288 aa)) folds into the Protein kinase 2 domain. Residues 538–546 (VAEVDFGTA) and lysine 560 contribute to the ATP site.

It belongs to the protein kinase superfamily. Ser/Thr protein kinase family.

It catalyses the reaction L-seryl-[protein] + ATP = O-phospho-L-seryl-[protein] + ADP + H(+). The catalysed reaction is L-threonyl-[protein] + ATP = O-phospho-L-threonyl-[protein] + ADP + H(+). The polypeptide is Receptor like protein kinase S.2 (LECRKS2) (Arabidopsis thaliana (Mouse-ear cress)).